We begin with the raw amino-acid sequence, 116 residues long: Large ribosomal subunit protein bL20 (116 aa).

Belongs to the bacterial ribosomal protein bL20 family.

Its function is as follows. Binds directly to 23S ribosomal RNA and is necessary for the in vitro assembly process of the 50S ribosomal subunit. It is not involved in the protein synthesizing functions of that subunit. The protein is Large ribosomal subunit protein bL20 of Helicobacter pylori (strain P12).